A 310-amino-acid chain; its full sequence is Methionyl-tRNA formyltransferase (310 aa).

110–113 is a (6S)-5,6,7,8-tetrahydrofolate binding site; the sequence is SLLP.

It belongs to the Fmt family.

The catalysed reaction is L-methionyl-tRNA(fMet) + (6R)-10-formyltetrahydrofolate = N-formyl-L-methionyl-tRNA(fMet) + (6S)-5,6,7,8-tetrahydrofolate + H(+). Attaches a formyl group to the free amino group of methionyl-tRNA(fMet). The formyl group appears to play a dual role in the initiator identity of N-formylmethionyl-tRNA by promoting its recognition by IF2 and preventing the misappropriation of this tRNA by the elongation apparatus. This Streptomyces avermitilis (strain ATCC 31267 / DSM 46492 / JCM 5070 / NBRC 14893 / NCIMB 12804 / NRRL 8165 / MA-4680) protein is Methionyl-tRNA formyltransferase.